We begin with the raw amino-acid sequence, 568 residues long: Potassium-transporting ATPase potassium-binding subunit (568 aa).

11 helical membrane-spanning segments follow: residues 6-26, 64-84, 135-155, 179-199, 254-274, 285-305, 382-402, 419-439, 459-481, 488-508, and 529-549; these read ILQI…IGGF, TGYA…TYLI, IALA…AIAF, LYIL…QGVI, LANL…TYTF, WALL…VYPA, GLYG…LMVG, MVML…AAGI, VLYG…SANT, LGIA…AAAG, and LFVT…FFPA.

It belongs to the KdpA family. In terms of assembly, the system is composed of three essential subunits: KdpA, KdpB and KdpC.

Its subcellular location is the cell inner membrane. Functionally, part of the high-affinity ATP-driven potassium transport (or Kdp) system, which catalyzes the hydrolysis of ATP coupled with the electrogenic transport of potassium into the cytoplasm. This subunit binds the periplasmic potassium ions and delivers the ions to the membrane domain of KdpB through an intramembrane tunnel. The sequence is that of Potassium-transporting ATPase potassium-binding subunit from Solibacter usitatus (strain Ellin6076).